The primary structure comprises 1023 residues: FHIP family protein AGAP011705 (1023 aa).

Composition is skewed to polar residues over residues 1–13, 806–825, and 868–888; these read MSWL…RQSF, SMTS…SSSY, and GLNH…ASMN. 2 disordered regions span residues 1–39 and 797–927; these read MSWL…AGGG and GKLL…AETQ. Positions 889 to 906 are enriched in low complexity; sequence VPSPVGQQQHQHQSVSSV.

It belongs to the FHIP family.

The chain is FHIP family protein AGAP011705 from Anopheles gambiae (African malaria mosquito).